A 526-amino-acid polypeptide reads, in one-letter code: Phosphoenolpyruvate carboxykinase (ATP) 2 (526 aa).

Positions 55, 190, and 196 each coordinate substrate. ATP is bound by residues Lys196, His215, and 231–239 (GLSGTGKTT). 2 residues coordinate Mn(2+): Lys196 and His215. Residue Asp252 participates in Mn(2+) binding. Positions 280, 317, and 442 each coordinate ATP. Arg317 lines the substrate pocket.

This sequence belongs to the phosphoenolpyruvate carboxykinase (ATP) family. Mn(2+) serves as cofactor.

Its subcellular location is the cytoplasm. It catalyses the reaction oxaloacetate + ATP = phosphoenolpyruvate + ADP + CO2. Its pathway is carbohydrate biosynthesis; gluconeogenesis. Its function is as follows. Involved in the gluconeogenesis. Catalyzes the conversion of oxaloacetate (OAA) to phosphoenolpyruvate (PEP) through direct phosphoryl transfer between the nucleoside triphosphate and OAA. In Moorella thermoacetica (strain ATCC 39073 / JCM 9320), this protein is Phosphoenolpyruvate carboxykinase (ATP) 2.